A 1637-amino-acid chain; its full sequence is Endoribonuclease Dicer homolog 3b (1637 aa).

A disordered region spans residues 1–40; it reads MADDEAAVLPPPPPLPPPCRPHRQLRPRGSRPTADTTPRT. Positions 9-19 are enriched in pro residues; that stretch reads LPPPPPLPPPC. Residues 20–29 are compositionally biased toward basic residues; it reads RPHRQLRPRG. Positions 46–222 constitute a Helicase ATP-binding domain; it reads VFEAALRGNT…LHNCEAHISQ (177 aa). 59 to 66 contributes to the ATP binding site; sequence LDTGSGKT. Residues 169–172 carry the DECH box motif; the sequence is DECH. The 153-residue stretch at 404–556 folds into the Helicase C-terminal domain; sequence SFGSSNEVLC…ALYRHPNALS (153 aa). The region spanning 581–671 is the Dicer dsRNA-binding fold domain; that stretch reads CVNLIRKYCE…VPLTEEPMDT (91 aa). Residues 882–1006 enclose the PAZ domain; it reads EIIHLANKSL…VPPELLIHLD (125 aa). One can recognise an RNase III 1 domain in the interval 1031–1200; the sequence is ASQLRREIGY…LVGAYYVGGG (170 aa). The Mg(2+) site is built by aspartate 1214, aspartate 1309, and serine 1312. In terms of domain architecture, RNase III 2 spans 1241-1389; the sequence is IEELEAKLKY…IAGAVFIDTD (149 aa). 2 DRBM domains span residues 1412-1481 and 1545-1629; these read LALP…DLKQ and GPRS…KLQE.

This sequence belongs to the helicase family. Dicer subfamily. In terms of assembly, may interact with ARGONAUTE1 or PINHEAD through their common PAZ domains. Mg(2+) is required as a cofactor. Mn(2+) serves as cofactor.

The protein resides in the nucleus. Probably involved in the RNA silencing pathway. May cleave double-stranded RNA to produce short 21-24 nucleotides (nt) RNAs which target the selective destruction of complementary RNAs. The polypeptide is Endoribonuclease Dicer homolog 3b (DCL3B) (Oryza sativa subsp. japonica (Rice)).